A 378-amino-acid chain; its full sequence is RNA polymerase sigma factor SigA (378 aa).

The interval 1 to 29 (MKNKTEVKNGGEKKNSKKVSKEESAKEKN) is disordered. The interval 145–215 (LAEANLRLVV…TRAIADQART (71 aa)) is sigma-70 factor domain-2. The short motif at 169–172 (DLIQ) is the Interaction with polymerase core subunit RpoC element. Positions 224–300 (ETINKLIRVS…DDEAPAPADA (77 aa)) are sigma-70 factor domain-3. The interval 313–366 (ILNTLTPREEKVLRLRFGLDDGRARTLEEVGKEFNVTRERIRQIEAKALRKLRH) is sigma-70 factor domain-4. A DNA-binding region (H-T-H motif) is located at residues 339-358 (LEEVGKEFNVTRERIRQIEA).

It belongs to the sigma-70 factor family. RpoD/SigA subfamily. In terms of assembly, interacts transiently with the RNA polymerase catalytic core.

The protein resides in the cytoplasm. Sigma factors are initiation factors that promote the attachment of RNA polymerase to specific initiation sites and are then released. This sigma factor is the primary sigma factor during exponential growth. The chain is RNA polymerase sigma factor SigA from Clostridium acetobutylicum (strain ATCC 824 / DSM 792 / JCM 1419 / IAM 19013 / LMG 5710 / NBRC 13948 / NRRL B-527 / VKM B-1787 / 2291 / W).